The chain runs to 444 residues: Argininosuccinate synthase (444 aa).

ATP contacts are provided by residues Ala-18 to Ser-26 and Ala-44. Residue Tyr-100 coordinates L-citrulline. ATP-binding residues include Gly-130 and Thr-132. Thr-132, Asn-136, and Asp-137 together coordinate L-aspartate. Asn-136 is a binding site for L-citrulline. Asp-137 contributes to the ATP binding site. The L-citrulline site is built by Arg-140 and Ser-193. Asp-195 serves as a coordination point for ATP. Residues Thr-202, Glu-204, and Glu-281 each contribute to the L-citrulline site.

Belongs to the argininosuccinate synthase family. Type 2 subfamily. In terms of assembly, homotetramer.

It localises to the cytoplasm. The enzyme catalyses L-citrulline + L-aspartate + ATP = 2-(N(omega)-L-arginino)succinate + AMP + diphosphate + H(+). Its pathway is amino-acid biosynthesis; L-arginine biosynthesis; L-arginine from L-ornithine and carbamoyl phosphate: step 2/3. This Histophilus somni (strain 2336) (Haemophilus somnus) protein is Argininosuccinate synthase.